The chain runs to 90 residues: uncharacterized protein (90 aa).

2 helical membrane-spanning segments follow: residues Ile-23–Phe-43 and Val-48–Phe-68.

It localises to the cell membrane. This is an uncharacterized protein from Rickettsia prowazekii (strain Madrid E).